A 254-amino-acid polypeptide reads, in one-letter code: Small ribosomal subunit protein uS3 (254 aa).

Residues 38-106 (IRKYVLARIP…DVQINIFEIK (69 aa)) enclose the KH type-2 domain. Residues 215–238 (NVGNAASGASSSSNNDNASPNQGG) are compositionally biased toward low complexity. Residues 215–254 (NVGNAASGASSSSNNDNASPNQGGPRRKRGGEGNRKKSNK) are disordered. The span at 244 to 254 (GGEGNRKKSNK) shows a compositional bias: basic and acidic residues.

Belongs to the universal ribosomal protein uS3 family. As to quaternary structure, part of the 30S ribosomal subunit. Forms a tight complex with proteins S10 and S14.

Functionally, binds the lower part of the 30S subunit head. Binds mRNA in the 70S ribosome, positioning it for translation. This is Small ribosomal subunit protein uS3 from Cytophaga hutchinsonii (strain ATCC 33406 / DSM 1761 / CIP 103989 / NBRC 15051 / NCIMB 9469 / D465).